The primary structure comprises 150 residues: Large ribosomal subunit protein uL15 (150 aa).

Residues Met1–Glu52 form a disordered region. Over residues Gly23 to Ala32 the composition is skewed to gly residues.

It belongs to the universal ribosomal protein uL15 family. In terms of assembly, part of the 50S ribosomal subunit.

Its function is as follows. Binds to the 23S rRNA. This chain is Large ribosomal subunit protein uL15, found in Christiangramia forsetii (strain DSM 17595 / CGMCC 1.15422 / KT0803) (Gramella forsetii).